Here is a 394-residue protein sequence, read N- to C-terminus: MRSLSIFGATGSIGESTFDLVMRKGGPEAFRTVALTGGRNIRRLAEMARALKAELAVTAHEDCLPALREALAGTGTEVAGGAQAIAEAADRPADWTMSAIVGAAGLVPGMRALKHGRTLALANKESLVTAGQLLMRTAEENGATILPVDSEHSAVFQALAGEDTACVERVIITASGGPFRDWSLERIRACTVAEAQAHPNWSMGQRISIDSASMFNKALELIETREFFGFEPDRIEAVVHPQSIVHAMVGFCDGGLMAHLGPADMRHAIGFALNWPGRGEVPVARIDLAQIASLTFQKPDEERFPALRLARDVMAARGLSGAAFNAAKEIALDHFIAGRIGFLDMAAVVEETLAGVSTDPLFGKVPDALEEVLAMDHLARRAAEEAAGLRQQKR.

Residues T10, G11, S12, I13, G38, R39, N40, and N123 each contribute to the NADPH site. K124 is a binding site for 1-deoxy-D-xylulose 5-phosphate. NADPH is bound at residue E125. D149 contributes to the Mn(2+) binding site. 1-deoxy-D-xylulose 5-phosphate-binding residues include S150, E151, S175, and H198. Mn(2+) is bound at residue E151. G204 is a binding site for NADPH. 1-deoxy-D-xylulose 5-phosphate is bound by residues S211, N216, K217, and E220. Position 220 (E220) interacts with Mn(2+).

It belongs to the DXR family. It depends on Mg(2+) as a cofactor. Requires Mn(2+) as cofactor.

The catalysed reaction is 2-C-methyl-D-erythritol 4-phosphate + NADP(+) = 1-deoxy-D-xylulose 5-phosphate + NADPH + H(+). Its pathway is isoprenoid biosynthesis; isopentenyl diphosphate biosynthesis via DXP pathway; isopentenyl diphosphate from 1-deoxy-D-xylulose 5-phosphate: step 1/6. Its function is as follows. Catalyzes the NADPH-dependent rearrangement and reduction of 1-deoxy-D-xylulose-5-phosphate (DXP) to 2-C-methyl-D-erythritol 4-phosphate (MEP). This chain is 1-deoxy-D-xylulose 5-phosphate reductoisomerase, found in Cereibacter sphaeroides (strain ATCC 17029 / ATH 2.4.9) (Rhodobacter sphaeroides).